Consider the following 238-residue polypeptide: tRNA (guanine-N(7)-)-methyltransferase (238 aa).

The S-adenosyl-L-methionine site is built by Glu-68, Glu-93, Asp-120, and Asp-143. Residue Asp-143 is part of the active site. Substrate-binding positions include Lys-147, Asp-179, and 216 to 219; that span reads TKFE.

Belongs to the class I-like SAM-binding methyltransferase superfamily. TrmB family.

It carries out the reaction guanosine(46) in tRNA + S-adenosyl-L-methionine = N(7)-methylguanosine(46) in tRNA + S-adenosyl-L-homocysteine. Its pathway is tRNA modification; N(7)-methylguanine-tRNA biosynthesis. Functionally, catalyzes the formation of N(7)-methylguanine at position 46 (m7G46) in tRNA. This Shewanella baltica (strain OS223) protein is tRNA (guanine-N(7)-)-methyltransferase.